Consider the following 1178-residue polypeptide: Tricalbin-2 (1178 aa).

A compositionally biased stretch (polar residues) spans 1 to 17 (MSPNSSKTRTDQISSMP). Residues 1-27 (MSPNSSKTRTDQISSMPGINEATKVES) are disordered. The Cytoplasmic portion of the chain corresponds to 1-98 (MSPNSSKTRT…NLLPDKFYGD (98 aa)). The chain crosses the membrane as a helical span at residues 99–119 (WYHEVAILIIAGLCSFVLGYF). Residue lysine 120 is a topological domain, extracellular. A helical transmembrane segment spans residues 121–141 (FSLASVLIVMLTTGMLYRTSS). At 142-1178 (KKYRESLRDL…TGDKKSEEKQ (1037 aa)) the chain is on the cytoplasmic side. Residues 164-367 (DYESVEWLNT…PPFSLQLNIP (204 aa)) enclose the SMP-LTD domain. C2 domains lie at 358 to 481 (PPFS…EKVH), 504 to 628 (PKKL…LKVT), and 632 to 749 (RPVD…DKYT). Residues 784–821 (LSLEEAKEVDEINEKKDKLEKQKSTLDDKNISKEEKER) are a coiled coil. Residues 962–1086 (QVSWFPVTAT…DPESDTTFNI (125 aa)) enclose the C2 4 domain. Serine 991 is subject to Phosphoserine.

This sequence belongs to the tricalbin family. As to quaternary structure, interacts with TCB1 and TCB3 via its C-terminal domain.

The protein resides in the cell membrane. Its subcellular location is the endoplasmic reticulum membrane. In terms of biological role, may play a role in membrane trafficking. This chain is Tricalbin-2 (TCB2), found in Saccharomyces cerevisiae (strain ATCC 204508 / S288c) (Baker's yeast).